An 82-amino-acid chain; its full sequence is Putative membrane protein insertion efficiency factor (82 aa).

It belongs to the UPF0161 family.

The protein localises to the cell inner membrane. Functionally, could be involved in insertion of integral membrane proteins into the membrane. This chain is Putative membrane protein insertion efficiency factor, found in Francisella tularensis subsp. novicida (strain U112).